The sequence spans 310 residues: Protein YIP5 (310 aa).

The tract at residues M1 to L84 is disordered. Positions D10 to G22 are enriched in acidic residues. Positions D35 to K57 are enriched in polar residues. Phosphoserine is present on S60. 5 helical membrane passes run T131–S151, L181–V201, L220–I240, T249–L269, and S290–F310.

Belongs to the YIP1 family. As to quaternary structure, interacts with SNX3, TVP18, TVP23, YIP1 and YIP4. Interacts with SEC4; The C-terminal cysteines in the Rab GTPase SEC4 are essential for the interaction. Interacts with YPT1, YPT6, YPT7, YPT10, YPT11, YPT31, YPT32 and YPT52; These proteins are all Rab GTPases.

It localises to the membrane. Functionally, possible role in vesicle-mediated transport. May be involved in proper membrane localization of Rab GTPases. The sequence is that of Protein YIP5 (YIP5) from Saccharomyces cerevisiae (strain ATCC 204508 / S288c) (Baker's yeast).